Consider the following 498-residue polypeptide: ATP synthase subunit beta, chloroplastic (498 aa).

Thr6 is modified (phosphothreonine). Ser13 carries the phosphoserine modification. 172-179 (GGAGVGKT) contacts ATP.

It belongs to the ATPase alpha/beta chains family. In terms of assembly, F-type ATPases have 2 components, CF(1) - the catalytic core - and CF(0) - the membrane proton channel. CF(1) has five subunits: alpha(3), beta(3), gamma(1), delta(1), epsilon(1). CF(0) has four main subunits: a(1), b(1), b'(1) and c(9-12).

It localises to the plastid. The protein resides in the chloroplast thylakoid membrane. The enzyme catalyses ATP + H2O + 4 H(+)(in) = ADP + phosphate + 5 H(+)(out). Produces ATP from ADP in the presence of a proton gradient across the membrane. The catalytic sites are hosted primarily by the beta subunits. This chain is ATP synthase subunit beta, chloroplastic, found in Draba nemorosa (Woodland whitlowgrass).